We begin with the raw amino-acid sequence, 327 residues long: Ribonucleoside-diphosphate reductase small chain (327 aa).

3 residues coordinate Fe cation: Asp70, Glu101, and His104. Tyr108 is an active-site residue. Residues Glu164, Glu198, and His201 each coordinate Fe cation.

Belongs to the ribonucleoside diphosphate reductase small chain family. Heterotetramer composed of a homodimer of the large subunit (R1) and a homodimer of the small subunit (R2). Larger multisubunit protein complex are also active, composed of (R1)n(R2)n. Fe cation is required as a cofactor.

The enzyme catalyses a 2'-deoxyribonucleoside 5'-diphosphate + [thioredoxin]-disulfide + H2O = a ribonucleoside 5'-diphosphate + [thioredoxin]-dithiol. In terms of biological role, ribonucleoside-diphosphate reductase holoenzyme provides the precursors necessary for viral DNA synthesis. Allows virus growth in non-dividing cells. Catalyzes the biosynthesis of deoxyribonucleotides from the corresponding ribonucleotides. This African swine fever virus (isolate Tick/Malawi/Lil 20-1/1983) (ASFV) protein is Ribonucleoside-diphosphate reductase small chain.